A 304-amino-acid chain; its full sequence is MWFKNLQLYRLPTPWNIDLAKFDEQLSRGPFVKCPSNQPMSRGWVSPRRDGALVYSLGQQWMIALSVEQRLLPSSVVNEEVKERAELMEAQQGYAPGRKQLKELRERVTEELMPRAFTRRRTTYVWLDPKNGWFCVDAGSPAKAEEVIEHLRHCLDDFPLTMLHTQVSPQAAMADWLAGGDAPAGFTIDRDCELKAAGEEKAAVRYVRHPLGDEISGEIKAHLASGKMPTKLALTWDDRISFVLGEKMEIKRLAFLDLLKEEAEKSAEHADEQFDADFALMTGELSRFLPQLVEALGGEVVEAK.

The protein belongs to the RdgC family.

Its subcellular location is the cytoplasm. It localises to the nucleoid. In terms of biological role, may be involved in recombination. The chain is Recombination-associated protein RdgC from Dechloromonas aromatica (strain RCB).